Here is a 518-residue protein sequence, read N- to C-terminus: Lysine 5,6-aminomutase alpha subunit (518 aa).

Residues 184-189 (RTTGQS), Ser-238, Tyr-263, Arg-268, and Asn-299 each bind pyridoxal 5'-phosphate.

Belongs to the KamD family. Heterotetramer of 2 alpha and 2 beta subunits. Requires adenosylcob(III)alamin as cofactor. The cofactor is pyridoxal 5'-phosphate.

It carries out the reaction (3S)-3,6-diaminohexanoate = (3S,5S)-3,5-diaminohexanoate. It catalyses the reaction D-lysine = (2R,5S)-2,5-diaminohexanoate. It participates in amino-acid degradation; L-lysine degradation via acetate pathway. Its function is as follows. Catalyzes the migration of the L-beta-lysine and D-lysine epsilon amino group to the delta carbon to produce 3,5-diaminohexanoate and 2,5-diaminohexanoate, respectively. The sequence is that of Lysine 5,6-aminomutase alpha subunit from Fusobacterium nucleatum subsp. nucleatum (strain ATCC 25586 / DSM 15643 / BCRC 10681 / CIP 101130 / JCM 8532 / KCTC 2640 / LMG 13131 / VPI 4355).